Consider the following 560-residue polypeptide: uncharacterized protein (560 aa).

Residues 1-29 form the signal peptide; it reads MKSALKKSVVSTSISLILASGMAAFAAHA. Aspartate 66, aspartate 67, and serine 132 together coordinate Ca(2+). Residue serine 132 is the Nucleophile of the active site. Serine 132 bears the 3-oxoalanine (Ser) mark. Histidine 185 is an active-site residue. Ca(2+) is bound by residues aspartate 345 and asparagine 346.

This sequence belongs to the sulfatase family. Ca(2+) is required as a cofactor. The conversion to 3-oxoalanine (also known as C-formylglycine, FGly), of a serine or cysteine residue in prokaryotes and of a cysteine residue in eukaryotes, is critical for catalytic activity.

This is an uncharacterized protein from Escherichia coli (strain K12).